A 205-amino-acid polypeptide reads, in one-letter code: Imidazole glycerol phosphate synthase subunit HisH (205 aa).

A Glutamine amidotransferase type-1 domain is found at 1–205; the sequence is MITIVDYQMG…RFATAPVEVA (205 aa). Cys-79 functions as the Nucleophile in the catalytic mechanism. Residues His-182 and Glu-184 contribute to the active site.

As to quaternary structure, heterodimer of HisH and HisF.

It is found in the cytoplasm. It catalyses the reaction 5-[(5-phospho-1-deoxy-D-ribulos-1-ylimino)methylamino]-1-(5-phospho-beta-D-ribosyl)imidazole-4-carboxamide + L-glutamine = D-erythro-1-(imidazol-4-yl)glycerol 3-phosphate + 5-amino-1-(5-phospho-beta-D-ribosyl)imidazole-4-carboxamide + L-glutamate + H(+). It carries out the reaction L-glutamine + H2O = L-glutamate + NH4(+). The protein operates within amino-acid biosynthesis; L-histidine biosynthesis; L-histidine from 5-phospho-alpha-D-ribose 1-diphosphate: step 5/9. IGPS catalyzes the conversion of PRFAR and glutamine to IGP, AICAR and glutamate. The HisH subunit catalyzes the hydrolysis of glutamine to glutamate and ammonia as part of the synthesis of IGP and AICAR. The resulting ammonia molecule is channeled to the active site of HisF. This chain is Imidazole glycerol phosphate synthase subunit HisH, found in Rhodopirellula baltica (strain DSM 10527 / NCIMB 13988 / SH1).